We begin with the raw amino-acid sequence, 944 residues long: MSGMVDLKEFLAELGKTQKELKNVIEQAKDIGLELKTNSKMTPEQAGKLYKYIVDGIKEQIQANQPAKNPEQDNKDDLNMVQTPKPLNKKVSKTPKKEETKSQPKPKKTKEKKKEAPTPIAKKKGGIEIVNTFENQTPPTENTPKVVSHSQIEKAKQKLQEIQKSREALNKLTQSNANNASNTNNAKKEISEVKKQEQEIKRHENIKRRTGFRVIKRNDETENESENSVTESKKPTQSVAAIFEDIKKEWQEKDKQEAKKAKKPSKPKATPTAKNNKSHKIDFSDARDFKGNDIYDDETDEILLFDLHEQDNLNKEEEEKEIRQNINDRVRVQRKNPWMNESGIKRQSKKKRAFRNDNSQKVIQSTIAIPEEVRVYEFAQKANLNLADVIKTLFNLGLMVTKNDFLDKDSIEILAEEFHLEISVQNTLEEFEVEEVLEGVKKERPPVVTIMGHVDHGKTSLLDKIRDKRVAHTEAGGITQHIGAYMVEKNDKWVSFIDTPGHEAFSQMRNRGAQVTDIAVIVIAADDGVKQQTIEALEHAKAANVPVIFAMNKMDKPNVNPDKLKAECAELGYNPVDWGGEHEFIPVSAKTGDGIDNLLETILIQADIMELKAIEEGSARAVVLEGSVEKGRGAVATVIVQSGTLSVGDSFFAETAFGKVRTMTDDQGKSIQNLKPSMVALITGLSEVPPAGSVLIGVENDSIARLQAQKRATYLRQKALSKSTKVSFDELSEMVANKELKNIPVVIKADTQGSLEAIKNSLLELNNEEVAIQVIHSGVGGITENDLSLVSSSDHAVILGFNIRPTGNVKNKAKEYNVSIKTYTVIYALIEEMRSLLLGLMSPIIEEEHTGQAEVRETFNIPKVGTIAGCVVSDGVIARGIKARLIRDGVVVHTGEILSLKRFKDDVKEVSKGYECGIMLDNYNEIKVGDVFETYKEIHKKRTL.

The interval 61–281 is disordered; sequence IQANQPAKNP…TAKNNKSHKI (221 aa). A compositionally biased stretch (polar residues) spans 132–150; sequence TFENQTPPTENTPKVVSHS. Residues 151-169 show a composition bias toward basic and acidic residues; that stretch reads QIEKAKQKLQEIQKSREAL. Over residues 175–185 the composition is skewed to low complexity; sequence SNANNASNTNN. Residues 186-203 show a composition bias toward basic and acidic residues; that stretch reads AKKEISEVKKQEQEIKRH. Residues 204-215 are compositionally biased toward basic residues; the sequence is ENIKRRTGFRVI. Basic and acidic residues predominate over residues 244 to 259; the sequence is EDIKKEWQEKDKQEAK. The 170-residue stretch at 443-612 folds into the tr-type G domain; sequence ERPPVVTIMG…LIQADIMELK (170 aa). The segment at 452-459 is G1; sequence GHVDHGKT. Position 452 to 459 (452 to 459) interacts with GTP; sequence GHVDHGKT. Residues 477 to 481 form a G2 region; it reads GITQH. The tract at residues 498 to 501 is G3; that stretch reads DTPG. GTP-binding positions include 498–502 and 552–555; these read DTPGH and NKMD. A G4 region spans residues 552–555; sequence NKMD. The G5 stretch occupies residues 588-590; sequence SAK.

Belongs to the TRAFAC class translation factor GTPase superfamily. Classic translation factor GTPase family. IF-2 subfamily.

The protein resides in the cytoplasm. Functionally, one of the essential components for the initiation of protein synthesis. Protects formylmethionyl-tRNA from spontaneous hydrolysis and promotes its binding to the 30S ribosomal subunits. Also involved in the hydrolysis of GTP during the formation of the 70S ribosomal complex. The protein is Translation initiation factor IF-2 of Helicobacter pylori (strain HPAG1).